We begin with the raw amino-acid sequence, 195 residues long: Protein LIGHT-DEPENDENT SHORT HYPOCOTYLS 7 (195 aa).

Disordered stretches follow at residues 1-41 and 154-195; these read MASH…LSRY and SQAK…NLAS. The span at 21–36 shows a compositional bias: pro residues; it reads QPQPQPHQPQSPPNPP. The 128-residue stretch at 40–167 folds into the ALOG domain; the sequence is RYESQKRRDW…ARGVPYKKRK (128 aa). Basic residues predominate over residues 162-175; the sequence is PYKKRKKRKKRNPM. Positions 165–169 match the Nuclear localization signal motif; it reads KRKKR. The span at 184 to 195 shows a compositional bias: low complexity; it reads TTGTSSSSNLAS.

It belongs to the plant homeotic and developmental regulators ALOG protein family.

It is found in the nucleus. In terms of biological role, probable transcription regulator that acts as a developmental regulator by promoting cell growth in response to light. The sequence is that of Protein LIGHT-DEPENDENT SHORT HYPOCOTYLS 7 (LSH7) from Arabidopsis thaliana (Mouse-ear cress).